The primary structure comprises 1369 residues: Xanthine dehydrogenase (1369 aa).

One can recognise a 2Fe-2S ferredoxin-type domain in the interval 20-106 (GEAVVYVNGV…GMHIITVEGI (87 aa)). [2Fe-2S] cluster-binding residues include Cys-58, Cys-63, Cys-66, Cys-88, Cys-128, Cys-131, Cys-164, and Cys-166. The 186-residue stretch at 265–450 (NGFNGIRWYR…LSVILPWTRP (186 aa)) folds into the FAD-binding PCMH-type domain. FAD contacts are provided by residues 293–300 (LIIGNSEV), Phe-373, 383–387 (SVGGN), Asp-396, Leu-440, and Lys-458. Gln-804 and Phe-835 together coordinate Mo-molybdopterin. 2 residues coordinate substrate: Glu-839 and Arg-917. Arg-949 lines the Mo-molybdopterin pocket. Substrate is bound by residues Phe-951 and Thr-1047. Residue Ala-1116 coordinates Mo-molybdopterin. The active-site Proton acceptor is the Glu-1305.

This sequence belongs to the xanthine dehydrogenase family. Homodimer. Requires [2Fe-2S] cluster as cofactor. FAD is required as a cofactor. It depends on Mo-molybdopterin as a cofactor.

It catalyses the reaction xanthine + NAD(+) + H2O = urate + NADH + H(+). It carries out the reaction hypoxanthine + NAD(+) + H2O = xanthine + NADH + H(+). In terms of biological role, key enzyme involved in purine catabolism. Catalyzes the oxidation of hypoxanthine to xanthine and the oxidation of xanthine to urate. This chain is Xanthine dehydrogenase (XDH), found in Oryza sativa subsp. japonica (Rice).